A 594-amino-acid polypeptide reads, in one-letter code: UvrABC system protein C (594 aa).

A GIY-YIG domain is found at 13–99 (NGSGVYQYFD…IKQLKPKYNI (87 aa)). The UVR domain maps to 205-240 (DKLIKELQLKMDRLSSNLRFEEALIYRDRISKIQKI).

The protein belongs to the UvrC family. As to quaternary structure, interacts with UvrB in an incision complex.

It is found in the cytoplasm. In terms of biological role, the UvrABC repair system catalyzes the recognition and processing of DNA lesions. UvrC both incises the 5' and 3' sides of the lesion. The N-terminal half is responsible for the 3' incision and the C-terminal half is responsible for the 5' incision. This is UvrABC system protein C from Helicobacter acinonychis (strain Sheeba).